We begin with the raw amino-acid sequence, 150 residues long: UPF0178 protein BamMC406_1579 (150 aa).

It belongs to the UPF0178 family.

This Burkholderia ambifaria (strain MC40-6) protein is UPF0178 protein BamMC406_1579.